We begin with the raw amino-acid sequence, 306 residues long: Tricarboxylate transporter FUM11 (306 aa).

Solcar repeat units follow at residues 18–98, 109–195, and 206–292; these read SDTL…YQKL, FGIL…LKQV, and IGTV…VVEG. Helical transmembrane passes span 24 to 44, 67 to 87, 113 to 133, 170 to 189, 209 to 229, and 267 to 286; these read LVAGSVAGGLEIAITYPAEFA, GLQWYSGCIPFLIGNSVKTSI, LAGFGAGATESLLAVTPSERI, GFWPTTARQSAGSAIRLGSY, VKTFIIGSLAGLITVYLTQPL, and GAVARSLRLVMSGGIVFMVY.

This sequence belongs to the mitochondrial carrier (TC 2.A.29) family.

The protein resides in the mitochondrion inner membrane. The protein operates within mycotoxin biosynthesis. In terms of biological role, tricarboxylate transporter; part of the gene cluster that mediates the biosynthesis of fumonisins B1 (FB1), B2 (FB2), B3 (FB3), and B4 (FB4), which are carcinogenic mycotoxins. Within the pathway, FUM11 is involved the addition of the tricarballylic moieties to the carbon backbone. FUM11 makes a tricarboxylic acid precursor available for fumonisin biosynthesis via its export from the mitochondria. The biosynthesis starts with the FUM1-catalyzed carbon chain assembly from one molecule of acetyl-CoA, eight molecules of malonyl-CoA, and two molecules of methionine (in S-adenosyl form). The C18 polyketide chain is released from the enzyme by a nucleophilic attack of a carbanion, which is derived from R-carbon of alanine by decarboxylation, on the carbonyl carbon of polyketide acyl chain. This step is catalyzed by the pyridoxal 5'-phosphate-dependent aminoacyl transferase FUM8. The resultant 3-keto intermediate is then stereospecifically reduced to a 3-hydroxyl product by reductase FUM13. Subsequent oxidations at C-10 by the cytochrome P450 monooxygenase FUM2, C-14 and C-15 by FUM6, FUM12 or FUM15, tricarballylic esterification of the hydroxyl groups on C-14 and C-15 by acyltransferase FUM14, and C-5 hydroxylation by 2-keto-glutarate-dependent dioxygenase FUM3 furnish the biosynthesis of fumonisins. The tricarballylic moieties are most likely derived from the citric acid cycle, and their addition to the carbon backbone may involve FUM7, FUM10, FUM11 and FUM14. The sequence is that of Tricarboxylate transporter FUM11 from Gibberella moniliformis (strain M3125 / FGSC 7600) (Maize ear and stalk rot fungus).